Here is a 506-residue protein sequence, read N- to C-terminus: MEAALVILDGWGLGDGDETDAVAAADTPAFDALAERGATGQLETHGRSVGLPDGQMGNSEVGHLNIGAGRVVKQDSTRVTDDIDAGVFADNEALARAFDHADDHDGRVHFMGLVSDGGVHSYQSHLHALVDLAAERGVEAVTHAFTDGRDTAPKSGVGFIEDLAATVEEAGTGDVATVCGRYYAMDRDENWERTKRAYDAIVHREAPHEADSAVAAVAASYDRGDTDEYVEPTLVSGTDAPLSADDAVVFFNFRADRARQLVRMLADIDPDWAFETDPPAAALVTMTEYDETFDLPVAYPPLAPEQPLGAVLAESDRTQLRMAESEKYAHVTYFLNGGREVAFEGERRDIVDSPDVPTYDEQPAMSAPELTDAAIDHIGADAPDVLVLNYANPDMVGHTGDFEAAKAAIEAVDEQLGRLESAIREAGGHLFVTADHGNADDMGTPEAPHTAHTTNPVPFVYCTPDGTDGGYTVRDGGTLADIAPTLLSTIGVDIPETMTGESLLER.

The Mn(2+) site is built by aspartate 9 and serine 59. Serine 59 (phosphoserine intermediate) is an active-site residue. Substrate contacts are provided by residues histidine 120, 149–150 (RD), arginine 181, arginine 187, 254–257 (RADR), and lysine 327. Mn(2+)-binding residues include aspartate 394, histidine 398, aspartate 435, histidine 436, and histidine 452.

It belongs to the BPG-independent phosphoglycerate mutase family. Mn(2+) is required as a cofactor.

The enzyme catalyses (2R)-2-phosphoglycerate = (2R)-3-phosphoglycerate. It participates in carbohydrate degradation; glycolysis; pyruvate from D-glyceraldehyde 3-phosphate: step 3/5. In terms of biological role, catalyzes the interconversion of 2-phosphoglycerate and 3-phosphoglycerate. The chain is 2,3-bisphosphoglycerate-independent phosphoglycerate mutase from Natronomonas pharaonis (strain ATCC 35678 / DSM 2160 / CIP 103997 / JCM 8858 / NBRC 14720 / NCIMB 2260 / Gabara) (Halobacterium pharaonis).